A 179-amino-acid chain; its full sequence is Large ribosomal subunit protein uL6 (179 aa).

The protein belongs to the universal ribosomal protein uL6 family. Part of the 50S ribosomal subunit.

This protein binds to the 23S rRNA, and is important in its secondary structure. It is located near the subunit interface in the base of the L7/L12 stalk, and near the tRNA binding site of the peptidyltransferase center. This is Large ribosomal subunit protein uL6 from Chlorobium luteolum (strain DSM 273 / BCRC 81028 / 2530) (Pelodictyon luteolum).